Reading from the N-terminus, the 490-residue chain is Mitochondrial-processing peptidase subunit beta (490 aa).

The transit peptide at 1–46 (MAAAAVARAVLFSAARRRLCGFTERLLIGGAAGRSLYFGGNRLRST) directs the protein to the mitochondrion. His102 provides a ligand contact to Zn(2+). Glu105 acts as the Proton acceptor in catalysis. Zn(2+) contacts are provided by His106 and Glu182.

This sequence belongs to the peptidase M16 family. As to quaternary structure, heterodimer of PMPCA (alpha) and PMPCB (beta) subunits, forming the mitochondrial processing protease (MPP) in which PMPCA is involved in substrate recognition and binding and PMPCB is the catalytic subunit. Zn(2+) is required as a cofactor.

It is found in the mitochondrion matrix. It catalyses the reaction Release of N-terminal transit peptides from precursor proteins imported into the mitochondrion, typically with Arg in position P2.. Binding to PMPCA is required for catalytic activity. In terms of biological role, catalytic subunit of the essential mitochondrial processing protease (MPP), which cleaves the mitochondrial sequence off newly imported precursors proteins. Preferentially, cleaves after an arginine at position P2. Required for PINK1 turnover by coupling PINK1 mitochondrial import and cleavage, which results in subsequent PINK1 proteolysis. The chain is Mitochondrial-processing peptidase subunit beta (PMPCB) from Bos taurus (Bovine).